Here is a 402-residue protein sequence, read N- to C-terminus: Galactoside 2-alpha-L-fucosyltransferase (402 aa).

Residues 1 to 6 lie on the Cytoplasmic side of the membrane; sequence MRYNSN. Residues 7-27 traverse the membrane as a helical; Signal-anchor for type II membrane protein segment; the sequence is YLMYFCLVLGIFANIYVIIKI. Residues 28-402 are Lumenal-facing; sequence TLGSSHILEY…TDLNGKISKY (375 aa). 3 N-linked (GlcNAc...) asparagine glycosylation sites follow: N119, N175, and N301.

The protein belongs to the glycosyltransferase 11 family. May form oligomers. In terms of processing, N-glycosylated. As to expression, expression is restricted to pharyngeal neurons and gland cells.

Its subcellular location is the golgi apparatus. The protein resides in the golgi stack membrane. Its pathway is protein modification; protein glycosylation. Selectively catalyzes the addition of fucose in alpha 1-2 linkage to Gal-beta-(1-&gt;3)-GalNAc-alpha-R, Gal-beta-(1-&gt;3)-(GlcNAc-beta-(1-&gt;6))-GalNAc-alpha-R and Gal-beta-(1-&gt;3)-GalNAc acceptors but not Gal-beta-(1-&gt;3)-GlcNAc-beta-(1-&gt;3)-Gal-beta-(1-&gt;4)-Glc in vitro. In Caenorhabditis elegans, this protein is Galactoside 2-alpha-L-fucosyltransferase.